The following is an 86-amino-acid chain: Small ribosomal subunit protein bS16 (86 aa).

This sequence belongs to the bacterial ribosomal protein bS16 family.

This chain is Small ribosomal subunit protein bS16, found in Thermoanaerobacter pseudethanolicus (strain ATCC 33223 / 39E) (Clostridium thermohydrosulfuricum).